A 37-amino-acid chain; its full sequence is Large ribosomal subunit protein bL36 (37 aa).

Belongs to the bacterial ribosomal protein bL36 family.

The sequence is that of Large ribosomal subunit protein bL36 (rpmJ) from Mycoplasmoides gallisepticum (strain R(low / passage 15 / clone 2)) (Mycoplasma gallisepticum).